Consider the following 360-residue polypeptide: S-adenosylmethionine:tRNA ribosyltransferase-isomerase (360 aa).

Belongs to the QueA family. As to quaternary structure, monomer.

The protein localises to the cytoplasm. The catalysed reaction is 7-aminomethyl-7-carbaguanosine(34) in tRNA + S-adenosyl-L-methionine = epoxyqueuosine(34) in tRNA + adenine + L-methionine + 2 H(+). It participates in tRNA modification; tRNA-queuosine biosynthesis. Transfers and isomerizes the ribose moiety from AdoMet to the 7-aminomethyl group of 7-deazaguanine (preQ1-tRNA) to give epoxyqueuosine (oQ-tRNA). This is S-adenosylmethionine:tRNA ribosyltransferase-isomerase from Sinorhizobium medicae (strain WSM419) (Ensifer medicae).